Reading from the N-terminus, the 211-residue chain is Thiamine-phosphate synthase (211 aa).

4-amino-2-methyl-5-(diphosphooxymethyl)pyrimidine-binding positions include 37–41 (QLRIK) and N69. Mg(2+) is bound by residues D70 and D89. S108 provides a ligand contact to 4-amino-2-methyl-5-(diphosphooxymethyl)pyrimidine. Residue 134-136 (TQT) participates in 2-[(2R,5Z)-2-carboxy-4-methylthiazol-5(2H)-ylidene]ethyl phosphate binding. 4-amino-2-methyl-5-(diphosphooxymethyl)pyrimidine is bound at residue K137. 2-[(2R,5Z)-2-carboxy-4-methylthiazol-5(2H)-ylidene]ethyl phosphate is bound by residues G166 and 186–187 (VS).

It belongs to the thiamine-phosphate synthase family. Requires Mg(2+) as cofactor.

The enzyme catalyses 2-[(2R,5Z)-2-carboxy-4-methylthiazol-5(2H)-ylidene]ethyl phosphate + 4-amino-2-methyl-5-(diphosphooxymethyl)pyrimidine + 2 H(+) = thiamine phosphate + CO2 + diphosphate. It catalyses the reaction 2-(2-carboxy-4-methylthiazol-5-yl)ethyl phosphate + 4-amino-2-methyl-5-(diphosphooxymethyl)pyrimidine + 2 H(+) = thiamine phosphate + CO2 + diphosphate. It carries out the reaction 4-methyl-5-(2-phosphooxyethyl)-thiazole + 4-amino-2-methyl-5-(diphosphooxymethyl)pyrimidine + H(+) = thiamine phosphate + diphosphate. The protein operates within cofactor biosynthesis; thiamine diphosphate biosynthesis; thiamine phosphate from 4-amino-2-methyl-5-diphosphomethylpyrimidine and 4-methyl-5-(2-phosphoethyl)-thiazole: step 1/1. In terms of biological role, condenses 4-methyl-5-(beta-hydroxyethyl)thiazole monophosphate (THZ-P) and 2-methyl-4-amino-5-hydroxymethyl pyrimidine pyrophosphate (HMP-PP) to form thiamine monophosphate (TMP). The chain is Thiamine-phosphate synthase from Shigella dysenteriae serotype 1 (strain Sd197).